Consider the following 666-residue polypeptide: Probable potassium transport system protein Kup (666 aa).

A run of 12 helical transmembrane segments spans residues 16 to 36 (GFII…LYTM), 58 to 78 (ISLI…LIAL), 100 to 120 (PWLI…GALT), 141 to 161 (IYQN…VLFG), 165 to 185 (FGTG…FSFL), 221 to 241 (IFIL…YSDL), 253 to 273 (WPFV…WILA), 294 to 314 (VYLV…LISG), 343 to 363 (LYIP…VLYF), 373 to 393 (YGLA…YYLI), 399 to 419 (PFLA…FFWA), and 424 to 444 (FMHG…VMFI).

The protein belongs to the HAK/KUP transporter (TC 2.A.72) family.

It is found in the cell membrane. It catalyses the reaction K(+)(in) + H(+)(in) = K(+)(out) + H(+)(out). In terms of biological role, transport of potassium into the cell. Likely operates as a K(+):H(+) symporter. The sequence is that of Probable potassium transport system protein Kup from Streptococcus pyogenes serotype M6 (strain ATCC BAA-946 / MGAS10394).